A 78-amino-acid chain; its full sequence is Putative Fe(2+) transport protein A (78 aa).

The protein belongs to the FeoA family.

Its function is as follows. Might be involved in Fe(2+) ion uptake. This is Putative Fe(2+) transport protein A from Helicobacter pylori (strain J99 / ATCC 700824) (Campylobacter pylori J99).